The following is a 335-amino-acid chain: Succinylglutamate desuccinylase (335 aa).

3 residues coordinate Zn(2+): His59, Glu62, and His151. Glu215 is an active-site residue.

Belongs to the AspA/AstE family. Succinylglutamate desuccinylase subfamily. It depends on Zn(2+) as a cofactor.

It catalyses the reaction N-succinyl-L-glutamate + H2O = L-glutamate + succinate. It functions in the pathway amino-acid degradation; L-arginine degradation via AST pathway; L-glutamate and succinate from L-arginine: step 5/5. Transforms N(2)-succinylglutamate into succinate and glutamate. The chain is Succinylglutamate desuccinylase from Pseudomonas putida (strain GB-1).